We begin with the raw amino-acid sequence, 649 residues long: DNA mismatch repair protein MutL (649 aa).

Belongs to the DNA mismatch repair MutL/HexB family.

In terms of biological role, this protein is involved in the repair of mismatches in DNA. It is required for dam-dependent methyl-directed DNA mismatch repair. May act as a 'molecular matchmaker', a protein that promotes the formation of a stable complex between two or more DNA-binding proteins in an ATP-dependent manner without itself being part of a final effector complex. The polypeptide is DNA mismatch repair protein MutL (Streptococcus pneumoniae (strain P1031)).